Reading from the N-terminus, the 275-residue chain is MAEAAGVPAESLAGCRARAARTVLDQVVLPGEELLLPDQEDGDGPGGAGERPLRLNAAARSRGRVVCGPGLRRCGDRLLVTKCGRLRHKEPGSGSGGGVYWVDSQQKRYVPVKGDHVIGIVTAKSGDIFKVDVGGSEPASLSYLAFEGATKRNRPNVQVGDLIYGQFVVANKDMEPEMVCIDSCGRANGMGVIGQDGLLFKVTLGLIRKLLAPDCEILQEVGKLYPLEIVFGMNGRIWVKAKTIQQTLILANILEACEHMTADQRKQIFSRLAES.

Ala-2 carries the N-acetylalanine modification. Lys-151 participates in a covalent cross-link: Glycyl lysine isopeptide (Lys-Gly) (interchain with G-Cter in SUMO2).

This sequence belongs to the RRP40 family. As to quaternary structure, component of the RNA exosome core complex (Exo-9), composed of EXOSC1, EXOSC2, EXOSC3, EXOSC4, EXOSC5, EXOSC6, EXOSC7, EXOSC8 and EXOSC9; within the complex interacts with EXOSC5 and EXOSC9. The catalytically inactive RNA exosome core complex (Exo-9) associates with the catalytic subunit EXOSC10/RRP6. Exo-9 may associate with DIS3 to form the nucleolar exosome complex, or DIS3L to form the cytoplasmic exosome complex. Exo-9 is formed by a hexameric base ring consisting of the heterodimers EXOSC4-EXOSC9, EXOSC5-EXOSC8 and EXOSC6-EXOSC7, and a cap ring consisting of EXOSC1, EXOSC2 and EXOSC3. The RNA exosome complex associates with cofactors C1D/RRP47, MPHOSPH6/MPP6 and MTREX/MTR4. Interacts with MPHOSPH6/MPP6; the interaction is direct. Interacts with GTPBP1. Interacts with ZC3HAV1. Interacts with DDX17 only in the presence of ZC3HAV1 in an RNA-independent manner. Interacts with DHX36; this interaction occurs in a RNase-insensitive manner. Interacts with HBS1L isoform 2.

The protein localises to the cytoplasm. It is found in the nucleus. It localises to the nucleolus. Functionally, non-catalytic component of the RNA exosome complex which has 3'-&gt;5' exoribonuclease activity and participates in a multitude of cellular RNA processing and degradation events. In the nucleus, the RNA exosome complex is involved in proper maturation of stable RNA species such as rRNA, snRNA and snoRNA, in the elimination of RNA processing by-products and non-coding 'pervasive' transcripts, such as antisense RNA species and promoter-upstream transcripts (PROMPTs), and of mRNAs with processing defects, thereby limiting or excluding their export to the cytoplasm. The RNA exosome may be involved in Ig class switch recombination (CSR) and/or Ig variable region somatic hypermutation (SHM) by targeting AICDA deamination activity to transcribed dsDNA substrates. In the cytoplasm, the RNA exosome complex is involved in general mRNA turnover and specifically degrades inherently unstable mRNAs containing AU-rich elements (AREs) within their 3' untranslated regions, and in RNA surveillance pathways, preventing translation of aberrant mRNAs. It seems to be involved in degradation of histone mRNA. The catalytic inactive RNA exosome core complex of 9 subunits (Exo-9) is proposed to play a pivotal role in the binding and presentation of RNA for ribonucleolysis, and to serve as a scaffold for the association with catalytic subunits and accessory proteins or complexes. EXOSC3 as peripheral part of the Exo-9 complex stabilizes the hexameric ring of RNase PH-domain subunits through contacts with EXOSC9 and EXOSC5. The polypeptide is Exosome complex component RRP40 (EXOSC3) (Bos taurus (Bovine)).